We begin with the raw amino-acid sequence, 179 residues long: Disulfide bond formation protein B (179 aa).

Residues 1–14 (MLSYFKELSLNRTA) are Cytoplasmic-facing. The helical transmembrane segment at 15 to 31 (WLLLAFVAFALEASAIY) threads the bilayer. The Periplasmic portion of the chain corresponds to 32–49 (FQYGMGLVPCVMCVYERL). Cys41 and Cys44 are oxidised to a cystine. Residues 50 to 65 (AIFGLLIAGLVGAISP) form a helical membrane-spanning segment. Residues 66–72 (RFFLTRW) lie on the Cytoplasmic side of the membrane. The helical transmembrane segment at 73-90 (LALLLWGFSAFKGLALAI) threads the bilayer. Residues 91–146 (KHHDYQANPSPWNQCEFKPEFPQTMPFDQWFPSIFAPGPVNCSEKQWEMFGLGMPE) lie on the Periplasmic side of the membrane. A disulfide bridge connects residues Cys105 and Cys132. The helical transmembrane segment at 147–165 (WLILAFSIFALMFVIVLLS) threads the bilayer. Topologically, residues 166–179 (QFKRAKPQYRSVFR) are cytoplasmic.

The protein belongs to the DsbB family.

Its subcellular location is the cell inner membrane. Functionally, required for disulfide bond formation in some periplasmic proteins. Acts by oxidizing the DsbA protein. In Actinobacillus pleuropneumoniae serotype 5b (strain L20), this protein is Disulfide bond formation protein B.